The sequence spans 523 residues: Monocarboxylate transporter 7 (523 aa).

At 1–21 (MTQNKLKLCSKANVYTEVPDG) the chain is on the cytoplasmic side. The helical transmembrane segment at 22–42 (GWGWAVAVSFFFVEVFTYGII) threads the bilayer. Over 43–62 (KTFGVFFNDLMDSFNESNSR) the chain is Extracellular. The chain crosses the membrane as a helical span at residues 63–83 (ISWIISICVFVLTFSAPLATV). The Cytoplasmic portion of the chain corresponds to 84–91 (LSNRFGHR). A helical membrane pass occupies residues 92-112 (LVVMLGGLLVSTGMVAASFSQ). The Extracellular segment spans residues 113–118 (EVSHMY). A helical transmembrane segment spans residues 119–139 (VAIGIISGLGYCFSFLPTVTI). Topologically, residues 140–149 (LSQYFGKRRS) are cytoplasmic. The chain crosses the membrane as a helical span at residues 150–170 (IVTAVASTGECFAVFAFAPAI). Topologically, residues 171–184 (MALKERIGWRYSLL) are extracellular. A helical transmembrane segment spans residues 185-205 (FVGLLQLNIVIFGALLRPIFI). Residues 206-299 (RGPASPKIVI…KEKSFICYAL (94 aa)) are Cytoplasmic-facing. Ser-234, Ser-237, Ser-240, and Ser-247 each carry phosphoserine. Residues 300-320 (FGLFATLGFFAPSLYIIPLGI) form a helical membrane-spanning segment. The Extracellular segment spans residues 321-330 (SLGIDQDRAA). A helical transmembrane segment spans residues 331-351 (FLLSTMAIAEVFGRIGAGFVL). The Cytoplasmic portion of the chain corresponds to 352–358 (NREPIRK). The helical transmembrane segment at 359–379 (IYIELICVILLTVSLFAFTFA) threads the bilayer. At 380-381 (TE) the chain is on the extracellular side. The helical transmembrane segment at 382 to 402 (FWGLMSCSIFFGFMVGTIGGT) threads the bilayer. Over 403 to 423 (HIPLLAEDDVVGIEKMSSAAG) the chain is Cytoplasmic. Residues 424 to 444 (VYIFIQSIAGLAGPPLAGLLV) traverse the membrane as a helical segment. Residues 445-452 (DQSKIYSR) lie on the Extracellular side of the membrane. The helical transmembrane segment at 453-473 (AFYSCAAGMALAAVCLALVRP) threads the bilayer. Over 474-523 (CKMGLCQHHHSGETKVVSHRGKTLQDIPEDFLEMDLAKNEHRVHVQMEPV) the chain is Cytoplasmic.

Belongs to the major facilitator superfamily. Monocarboxylate porter (TC 2.A.1.13) family. As to quaternary structure, forms functional complexes with BSG/CD147 or EMB/GP70 ancillary proteins.

It localises to the basolateral cell membrane. The enzyme catalyses taurine(out) = taurine(in). Monocarboxylate transporter selective for taurine. May associate with BSG/CD147 or EMB/GP70 ancillary proteins to mediate facilitative efflux or influx of taurine across the plasma membrane. The transport is pH- and sodium-independent. Rather low-affinity, is likely effective for taurine transport in tissues where taurine is present at high concentrations. This Homo sapiens (Human) protein is Monocarboxylate transporter 7.